A 128-amino-acid polypeptide reads, in one-letter code: Ribonuclease P protein component (128 aa).

The protein belongs to the RnpA family. As to quaternary structure, consists of a catalytic RNA component (M1 or rnpB) and a protein subunit.

The enzyme catalyses Endonucleolytic cleavage of RNA, removing 5'-extranucleotides from tRNA precursor.. Its function is as follows. RNaseP catalyzes the removal of the 5'-leader sequence from pre-tRNA to produce the mature 5'-terminus. It can also cleave other RNA substrates such as 4.5S RNA. The protein component plays an auxiliary but essential role in vivo by binding to the 5'-leader sequence and broadening the substrate specificity of the ribozyme. The polypeptide is Ribonuclease P protein component (Prochlorococcus marinus (strain AS9601)).